Here is a 721-residue protein sequence, read N- to C-terminus: Long-chain-fatty-acid--CoA ligase ACSBG1 (721 aa).

Positions 1 to 64 (MPRGSEAGYC…SHGLELSAPE (64 aa)) are disordered. Residues 26 to 52 (QQGASLGTSQDNSQTSSLIDGQTLSKE) are compositionally biased toward polar residues. 4 positions are modified to phosphoserine: Ser-34, Ser-50, Ser-53, and Ser-70. Residues 279–287 (TSGTTGNPK), 469–474 (AGYGLS), Asp-547, and Arg-562 contribute to the ATP site. Phosphotyrosine is present on Tyr-655. Lys-698 lines the ATP pocket.

The protein belongs to the ATP-dependent AMP-binding enzyme family. Bubblegum subfamily. Mainly expressed in brain. Also expressed in adrenal gland and testis. In brain, it is present in cerebral cortical and cerebellar neurons and in steroidogenic cells of the adrenal gland, testis and ovary (at protein level).

The protein localises to the cytoplasm. The protein resides in the cytoplasmic vesicle. It localises to the microsome. Its subcellular location is the endoplasmic reticulum. It is found in the cell membrane. It carries out the reaction a long-chain fatty acid + ATP + CoA = a long-chain fatty acyl-CoA + AMP + diphosphate. It catalyses the reaction (E)-hexadec-2-enoate + ATP + CoA = (2E)-hexadecenoyl-CoA + AMP + diphosphate. The enzyme catalyses hexadecanoate + ATP + CoA = hexadecanoyl-CoA + AMP + diphosphate. In terms of biological role, catalyzes the conversion of fatty acids such as long-chain and very long-chain fatty acids to their active form acyl-CoAs for both synthesis of cellular lipids, and degradation via beta-oxidation. Can activate diverse saturated, monosaturated and polyunsaturated fatty acids. The protein is Long-chain-fatty-acid--CoA ligase ACSBG1 of Mus musculus (Mouse).